Consider the following 268-residue polypeptide: Pantothenate synthetase (268 aa).

ATP is bound at residue 18–25 (MGYLHEGH). His-25 acts as the Proton donor in catalysis. Residue Gln-49 coordinates (R)-pantoate. Gln-49 contributes to the beta-alanine binding site. 135-138 (GQKD) is a binding site for ATP. Gln-141 contributes to the (R)-pantoate binding site. ATP contacts are provided by residues Val-164 and 172 to 175 (LSSR).

This sequence belongs to the pantothenate synthetase family. Homodimer.

The protein resides in the cytoplasm. The enzyme catalyses (R)-pantoate + beta-alanine + ATP = (R)-pantothenate + AMP + diphosphate + H(+). It functions in the pathway cofactor biosynthesis; (R)-pantothenate biosynthesis; (R)-pantothenate from (R)-pantoate and beta-alanine: step 1/1. Catalyzes the condensation of pantoate with beta-alanine in an ATP-dependent reaction via a pantoyl-adenylate intermediate. In Dehalococcoides mccartyi (strain ATCC BAA-2266 / KCTC 15142 / 195) (Dehalococcoides ethenogenes (strain 195)), this protein is Pantothenate synthetase.